The chain runs to 502 residues: UDP-N-acetylmuramate--L-alanine ligase (502 aa).

ATP is bound at residue G120 to S126.

It belongs to the MurCDEF family.

The protein resides in the cytoplasm. It catalyses the reaction UDP-N-acetyl-alpha-D-muramate + L-alanine + ATP = UDP-N-acetyl-alpha-D-muramoyl-L-alanine + ADP + phosphate + H(+). It functions in the pathway cell wall biogenesis; peptidoglycan biosynthesis. Its function is as follows. Cell wall formation. This Rhodococcus erythropolis (strain PR4 / NBRC 100887) protein is UDP-N-acetylmuramate--L-alanine ligase.